A 284-amino-acid polypeptide reads, in one-letter code: MSVPRIDGETSLVGLIGHPVSHSLSPQMHNASFAALGLNYVYVPLDVPPEELEAGVRGLRALGFRGFNVTMPHKERVCALVDRLDEAARISGAVNTVAVEEDGSLLGMNTDGSGFLLACREAGVEPSGRVALVAGAGGAAAAVAVALLRAGLSELRIANRTPGRALGLRERLGGLGGRVEVFPLSGLAEAAGGADILVNATYLGMRAGDPLPFPEELLRPGVAVCDAVYRPGKSTALVRAARRRGLAAVPGELMLLYQGVEAQRAWTGVDPDVGAMRRALSGEG.

Residues 23–25 and T70 contribute to the shikimate site; that span reads SLS. The active-site Proton acceptor is the K74. E86 serves as a coordination point for NADP(+). Residues N95 and D111 each contribute to the shikimate site. NADP(+) contacts are provided by residues 135-139, 159-164, and A227; these read GAGGA and NRTPGR. Residue Y229 participates in shikimate binding. Residue G251 coordinates NADP(+).

The protein belongs to the shikimate dehydrogenase family. As to quaternary structure, homodimer.

It catalyses the reaction shikimate + NADP(+) = 3-dehydroshikimate + NADPH + H(+). It participates in metabolic intermediate biosynthesis; chorismate biosynthesis; chorismate from D-erythrose 4-phosphate and phosphoenolpyruvate: step 4/7. Its function is as follows. Involved in the biosynthesis of the chorismate, which leads to the biosynthesis of aromatic amino acids. Catalyzes the reversible NADPH linked reduction of 3-dehydroshikimate (DHSA) to yield shikimate (SA). This chain is Shikimate dehydrogenase (NADP(+)), found in Rubrobacter xylanophilus (strain DSM 9941 / JCM 11954 / NBRC 16129 / PRD-1).